Here is a 598-residue protein sequence, read N- to C-terminus: Aluminum-activated malate transporter 9 (598 aa).

6 helical membrane passes run 88–108 (IVFSAKIGLALTIVALLIFYQ), 117–137 (YSVWAILTVVVVFEFTIGATL), 144–164 (ALGTLSAGGLALGMAELSTLF), 170–190 (IFCTLSIFCIGFLATFMKLYP), 194–214 (AYEYGFRVFLLTYCYILISGF), and 227–247 (FLLIALGAGVSLGVNMFIYPI).

It belongs to the aromatic acid exporter (TC 2.A.85) family. Expressed in hypocotyls, leaves, roots, flowers, sepals and stamina. In leaves, expressed almost exclusively in mesophyll cells.

Its subcellular location is the vacuole membrane. With respect to regulation, slow activation by external aluminum. Functionally, vacuolar malate channel. Has a higher selectivity for malate than for fumarate. Also exhibits a weak chloride conductance. The polypeptide is Aluminum-activated malate transporter 9 (ALMT9) (Arabidopsis thaliana (Mouse-ear cress)).